The sequence spans 1405 residues: DNA-directed RNA polymerase III subunit rpc1 (1405 aa).

The Zn(2+) site is built by C66, C69, C76, H79, C106, C109, and C153. Mg(2+) is bound by residues D493, D495, and D497. Positions 838–850 (PTEFLFHAISGRE) are bridging helix.

It belongs to the RNA polymerase beta' chain family. As to quaternary structure, component of the RNA polymerase III (Pol III) complex consisting of 17 subunits.

Its subcellular location is the nucleus. The enzyme catalyses RNA(n) + a ribonucleoside 5'-triphosphate = RNA(n+1) + diphosphate. In terms of biological role, DNA-dependent RNA polymerase catalyzes the transcription of DNA into RNA using the four ribonucleoside triphosphates as substrates. Largest and catalytic core component of RNA polymerase III which synthesizes small RNAs, such as 5S rRNA and tRNAs. Forms the polymerase active center together with the second largest subunit. A single-stranded DNA template strand of the promoter is positioned within the central active site cleft of Pol III. A bridging helix emanates from RPC1 and crosses the cleft near the catalytic site and is thought to promote translocation of Pol III by acting as a ratchet that moves the RNA-DNA hybrid through the active site by switching from straight to bent conformations at each step of nucleotide addition. This Schizosaccharomyces pombe (strain 972 / ATCC 24843) (Fission yeast) protein is DNA-directed RNA polymerase III subunit rpc1 (rpc1).